The chain runs to 242 residues: NLP effector protein 8 (242 aa).

Positions 1–17 (MHLTVFYLVALCTFASA) are cleaved as a signal peptide. Positions 108–118 (AIMYAWYFPRD) match the Conserved undecapeptide motif motif. The Conserved heptapeptide motif signature appears at 127–133 (GHRNAWE). The N-linked (GlcNAc...) asparagine glycan is linked to Asn-206.

It belongs to the Necrosis inducing protein (NPP1) family.

The protein resides in the secreted. Probable secreted effector that may act as a pathogen-associated molecular pattern (PAMP) recognized by the plant immune system. The chain is NLP effector protein 8 from Plasmopara viticola (Downy mildew of grapevine).